Here is a 138-residue protein sequence, read N- to C-terminus: Transcription antitermination protein NusB (138 aa).

The protein belongs to the NusB family.

In terms of biological role, involved in transcription antitermination. Required for transcription of ribosomal RNA (rRNA) genes. Binds specifically to the boxA antiterminator sequence of the ribosomal RNA (rrn) operons. This is Transcription antitermination protein NusB from Tolumonas auensis (strain DSM 9187 / NBRC 110442 / TA 4).